A 1095-amino-acid polypeptide reads, in one-letter code: DNA-directed RNA polymerase subunit beta (1095 aa).

Positions 1069 to 1095 (DLMQDVNPRRSTPSRPTYESLGKEYEE) are disordered.

The protein belongs to the RNA polymerase beta chain family. In terms of assembly, in cyanobacteria the RNAP catalytic core is composed of 2 alpha, 1 beta, 1 beta', 1 gamma and 1 omega subunit. When a sigma factor is associated with the core the holoenzyme is formed, which can initiate transcription.

The enzyme catalyses RNA(n) + a ribonucleoside 5'-triphosphate = RNA(n+1) + diphosphate. DNA-dependent RNA polymerase catalyzes the transcription of DNA into RNA using the four ribonucleoside triphosphates as substrates. This Prochlorococcus marinus (strain NATL2A) protein is DNA-directed RNA polymerase subunit beta.